Consider the following 131-residue polypeptide: MLGSLSWEHMLVLVVVGLVVLGPERLPGAIRWTSNALRQARDYLSGVTTQLREDLGPEFDDLRVPLSELQKLRGMTPRAALTKHLLDGDDSFLTGAFDRPVNGAAAQPPPAPAPPPEPHRSGQTPFDADAT.

A helical transmembrane segment spans residues 2–22 (LGSLSWEHMLVLVVVGLVVLG). The segment at 96–131 (AFDRPVNGAAAQPPPAPAPPPEPHRSGQTPFDADAT) is disordered. Over residues 107 to 116 (QPPPAPAPPP) the composition is skewed to pro residues.

Belongs to the TatB family. The Tat system comprises two distinct complexes: a TatABC complex, containing multiple copies of TatA, TatB and TatC subunits, and a separate TatA complex, containing only TatA subunits. Substrates initially bind to the TatABC complex, which probably triggers association of the separate TatA complex to form the active translocon.

The protein resides in the cell membrane. Functionally, part of the twin-arginine translocation (Tat) system that transports large folded proteins containing a characteristic twin-arginine motif in their signal peptide across membranes. Together with TatC, TatB is part of a receptor directly interacting with Tat signal peptides. TatB may form an oligomeric binding site that transiently accommodates folded Tat precursor proteins before their translocation. This chain is Sec-independent protein translocase protein TatB, found in Mycolicibacterium paratuberculosis (strain ATCC BAA-968 / K-10) (Mycobacterium paratuberculosis).